The chain runs to 227 residues: ATP-dependent Clp protease proteolytic subunit (227 aa).

S123 serves as the catalytic Nucleophile. H148 is an active-site residue.

Belongs to the peptidase S14 family. As to quaternary structure, fourteen ClpP subunits assemble into 2 heptameric rings which stack back to back to give a disk-like structure with a central cavity, resembling the structure of eukaryotic proteasomes.

The protein resides in the cytoplasm. It catalyses the reaction Hydrolysis of proteins to small peptides in the presence of ATP and magnesium. alpha-casein is the usual test substrate. In the absence of ATP, only oligopeptides shorter than five residues are hydrolyzed (such as succinyl-Leu-Tyr-|-NHMec, and Leu-Tyr-Leu-|-Tyr-Trp, in which cleavage of the -Tyr-|-Leu- and -Tyr-|-Trp bonds also occurs).. Its function is as follows. Cleaves peptides in various proteins in a process that requires ATP hydrolysis. Has a chymotrypsin-like activity. Plays a major role in the degradation of misfolded proteins. This chain is ATP-dependent Clp protease proteolytic subunit, found in Chlorobium phaeobacteroides (strain DSM 266 / SMG 266 / 2430).